Here is a 153-residue protein sequence, read N- to C-terminus: Large ribosomal subunit protein uL13 (153 aa).

Belongs to the universal ribosomal protein uL13 family. In terms of assembly, part of the 50S ribosomal subunit.

This protein is one of the early assembly proteins of the 50S ribosomal subunit, although it is not seen to bind rRNA by itself. It is important during the early stages of 50S assembly. The chain is Large ribosomal subunit protein uL13 from Azorhizobium caulinodans (strain ATCC 43989 / DSM 5975 / JCM 20966 / LMG 6465 / NBRC 14845 / NCIMB 13405 / ORS 571).